A 380-amino-acid polypeptide reads, in one-letter code: tRNA-specific 2-thiouridylase MnmA (380 aa).

Residues 14–21 (GLSGGVDS) and Met-40 each bind ATP. Positions 100-102 (NPD) are interaction with target base in tRNA. Cys-105 serves as the catalytic Nucleophile. A disulfide bridge connects residues Cys-105 and Cys-203. Gly-129 is an ATP binding site. Residues 153-155 (KDQ) are interaction with tRNA. Catalysis depends on Cys-203, which acts as the Cysteine persulfide intermediate. The tract at residues 322 to 323 (RY) is interaction with tRNA.

The protein belongs to the MnmA/TRMU family.

It localises to the cytoplasm. It carries out the reaction S-sulfanyl-L-cysteinyl-[protein] + uridine(34) in tRNA + AH2 + ATP = 2-thiouridine(34) in tRNA + L-cysteinyl-[protein] + A + AMP + diphosphate + H(+). In terms of biological role, catalyzes the 2-thiolation of uridine at the wobble position (U34) of tRNA, leading to the formation of s(2)U34. This is tRNA-specific 2-thiouridylase MnmA from Leptothrix cholodnii (strain ATCC 51168 / LMG 8142 / SP-6) (Leptothrix discophora (strain SP-6)).